The chain runs to 319 residues: Acetyl-coenzyme A carboxylase carboxyl transferase subunit alpha (319 aa).

Positions 32 to 293 (NVETEVRALR…KAVLLNELDA (262 aa)) constitute a CoA carboxyltransferase C-terminal domain.

The protein belongs to the AccA family. Acetyl-CoA carboxylase is a heterohexamer composed of biotin carboxyl carrier protein (AccB), biotin carboxylase (AccC) and two subunits each of ACCase subunit alpha (AccA) and ACCase subunit beta (AccD).

Its subcellular location is the cytoplasm. The catalysed reaction is N(6)-carboxybiotinyl-L-lysyl-[protein] + acetyl-CoA = N(6)-biotinyl-L-lysyl-[protein] + malonyl-CoA. It participates in lipid metabolism; malonyl-CoA biosynthesis; malonyl-CoA from acetyl-CoA: step 1/1. In terms of biological role, component of the acetyl coenzyme A carboxylase (ACC) complex. First, biotin carboxylase catalyzes the carboxylation of biotin on its carrier protein (BCCP) and then the CO(2) group is transferred by the carboxyltransferase to acetyl-CoA to form malonyl-CoA. The polypeptide is Acetyl-coenzyme A carboxylase carboxyl transferase subunit alpha (Xanthomonas oryzae pv. oryzae (strain MAFF 311018)).